Reading from the N-terminus, the 515-residue chain is Cyclic AMP receptor-like protein G (515 aa).

Topologically, residues 1 to 16 are extracellular; that stretch reads MSSIIFIPNDADNINS. The helical transmembrane segment at 17–37 threads the bilayer; that stretch reads IMVTISSSLSLVGCLFILSIY. The Cytoplasmic segment spans residues 38–50; it reads IYYKELREFQLKL. A helical transmembrane segment spans residues 51 to 71; it reads IFIMTINDFIISIIFLIATHI. Topologically, residues 72 to 92 are extracellular; sequence QTKYFDAITNVFPFFCNFPDS. The helical transmembrane segment at 93–113 threads the bilayer; that stretch reads LLHYFFLSSFFWEVCIAHTLI. At 114–129 the chain is on the cytoplasmic side; the sequence is QVIKYNNDKVEDNLKK. A helical membrane pass occupies residues 130-150; sequence YFIFSNGLSALIMVSLFFIRS. The Extracellular segment spans residues 151-164; the sequence is YSKIDCHHDSIFPH. Residues 165–185 form a helical membrane-spanning segment; the sequence is LLFFIPLLLTWIYNIIVCALL. At 186–276 the chain is on the cytoplasmic side; the sequence is TKTFKEQAMN…IRKTPNIIWT (91 aa). Residues 277-297 form a helical membrane-spanning segment; that stretch reads SIFFLFSFGFIWSWSILVIIL. The Extracellular segment spans residues 298 to 306; it reads KYLSLDVKY. Residues 307 to 327 traverse the membrane as a helical segment; it reads ILMISYFFIPLHGCMNAVCFG. Residues 328-515 are Cytoplasmic-facing; sequence VNDRLRMNLK…FCTIDEDETK (188 aa). The segment covering 362-375 has biased composition (low complexity); it reads NGNNKNNKNNNGAN. Disordered regions lie at residues 362 to 409 and 469 to 515; these read NGNN…YYQI and NNNN…DETK. Positions 385–396 are enriched in acidic residues; sequence SPDDDDDEDDDN. Low complexity-rich tracts occupy residues 397 to 407 and 469 to 504; these read NNNNYSDGNYY and NNNN…NNNN.

The protein belongs to the G-protein coupled receptor 5 family.

It is found in the membrane. Functionally, receptor for cAMP. The polypeptide is Cyclic AMP receptor-like protein G (crlG) (Dictyostelium discoideum (Social amoeba)).